The sequence spans 291 residues: Cell division protein ZipA (291 aa).

At 1–5 (MQELR) the chain is on the periplasmic side. A helical membrane pass occupies residues 6–26 (FVLIIVGALAIAALLFHGLWT). Residues 27–291 (SKKEGKSKFG…QEFKVRAAQA (265 aa)) lie on the Cytoplasmic side of the membrane. Positions 29–51 (KEGKSKFGDKPLRKMKVESDDPP) are enriched in basic and acidic residues. Disordered regions lie at residues 29 to 61 (KEGK…EDDF) and 92 to 119 (ELDE…VQPQ).

Belongs to the ZipA family. In terms of assembly, interacts with FtsZ via their C-terminal domains.

Its subcellular location is the cell inner membrane. In terms of biological role, essential cell division protein that stabilizes the FtsZ protofilaments by cross-linking them and that serves as a cytoplasmic membrane anchor for the Z ring. Also required for the recruitment to the septal ring of downstream cell division proteins. This chain is Cell division protein ZipA, found in Vibrio cholerae serotype O1 (strain ATCC 39541 / Classical Ogawa 395 / O395).